The primary structure comprises 130 residues: Succinate dehydrogenase assembly factor 3, mitochondrial (130 aa).

The N-terminal 8 residues, 1-8 (MRPSLLRL), are a transit peptide targeting the mitochondrion.

This sequence belongs to the complex I LYR family. SDHAF3 subfamily. In terms of assembly, interacts with the iron-sulfur protein subunit within the SDH catalytic dimer.

Its subcellular location is the mitochondrion matrix. Its function is as follows. Plays an essential role in the assembly of succinate dehydrogenase (SDH), an enzyme complex (also referred to as respiratory complex II) that is a component of both the tricarboxylic acid (TCA) cycle and the mitochondrial electron transport chain, and which couples the oxidation of succinate to fumarate with the reduction of ubiquinone (coenzyme Q) to ubiquinol. Promotes maturation of the iron-sulfur protein subunit of the SDH catalytic dimer, protecting it from the deleterious effects of oxidants. May act together with SDHAF1. The protein is Succinate dehydrogenase assembly factor 3, mitochondrial of Gibberella zeae (strain ATCC MYA-4620 / CBS 123657 / FGSC 9075 / NRRL 31084 / PH-1) (Wheat head blight fungus).